The primary structure comprises 44 residues: Cytochrome b559 subunit beta (44 aa).

Residues 19–35 (WLAIHGIAVPTIFFLGA) traverse the membrane as a helical segment. H23 is a binding site for heme.

The protein belongs to the PsbE/PsbF family. As to quaternary structure, heterodimer of an alpha subunit and a beta subunit. PSII is composed of 1 copy each of membrane proteins PsbA, PsbB, PsbC, PsbD, PsbE, PsbF, PsbH, PsbI, PsbJ, PsbK, PsbL, PsbM, PsbT, PsbX, PsbY, PsbZ, Psb30/Ycf12, at least 3 peripheral proteins of the oxygen-evolving complex and a large number of cofactors. It forms dimeric complexes. It depends on heme b as a cofactor.

The protein localises to the plastid. The protein resides in the chloroplast thylakoid membrane. In terms of biological role, this b-type cytochrome is tightly associated with the reaction center of photosystem II (PSII). PSII is a light-driven water:plastoquinone oxidoreductase that uses light energy to abstract electrons from H(2)O, generating O(2) and a proton gradient subsequently used for ATP formation. It consists of a core antenna complex that captures photons, and an electron transfer chain that converts photonic excitation into a charge separation. The polypeptide is Cytochrome b559 subunit beta (Chlamydomonas reinhardtii (Chlamydomonas smithii)).